Consider the following 255-residue polypeptide: Trypsin alpha-4 (255 aa).

A signal peptide spans 1-16; the sequence is MLKFVVLLCAISCALG. The propeptide at 17–30 is activation peptide; that stretch reads AAVPEGMVPQLDGR. The Peptidase S1 domain occupies 31–253; sequence IVGGVATTIS…LRTWVVSAAS (223 aa). An intrachain disulfide couples cysteine 56 to cysteine 72. Catalysis depends on charge relay system residues histidine 71 and aspartate 116. Disulfide bonds link cysteine 179/cysteine 196 and cysteine 205/cysteine 229. Serine 209 serves as the catalytic Charge relay system.

This sequence belongs to the peptidase S1 family.

Its subcellular location is the secreted. It localises to the extracellular space. It catalyses the reaction Preferential cleavage: Arg-|-Xaa, Lys-|-Xaa.. The chain is Trypsin alpha-4 from Lucilia cuprina (Green bottle fly).